We begin with the raw amino-acid sequence, 273 residues long: Histidine racemase (273 aa).

Cys72 serves as the catalytic Proton acceptor. The active-site Proton donor is Cys211.

It belongs to the histidine racemase family. In terms of assembly, homodimer.

Its subcellular location is the cytoplasm. It catalyses the reaction L-histidine = D-histidine. In terms of biological role, isomerase that catalyzes the conversion of L-histidine to D-histidine. Functions the biosynthesis of the metallophore staphylopine, which is involved in the acquisition of nickel, cobalt, zinc, copper, and iron, and thus enables bacterial growth inside the host, where metal access is limited. Therefore, this enzyme probably contributes to staphylococcal virulence. The reaction is reversible in vitro, the enzyme can produce D-histidine from the L-stereoisomer and vice versa. Appears to be specific for histidine as it cannot use other amino acids as substrate, including L-alanine and L-methionine. The polypeptide is Histidine racemase (Staphylococcus aureus (strain Mu50 / ATCC 700699)).